We begin with the raw amino-acid sequence, 411 residues long: Tyrosine--tRNA ligase (411 aa).

Tyr-34 lines the L-tyrosine pocket. The 'HIGH' region signature appears at 39 to 48; it reads CTATSLHIGS. Residues Tyr-171 and Gln-175 each coordinate L-tyrosine. A 'KMSKS' region motif is present at residues 231–235; sequence KMGKT. Lys-234 lines the ATP pocket. An S4 RNA-binding domain is found at 345-411; sequence ISAYELFHEA…GKKRHILVRV (67 aa).

It belongs to the class-I aminoacyl-tRNA synthetase family. TyrS type 1 subfamily. In terms of assembly, homodimer.

The protein localises to the cytoplasm. The enzyme catalyses tRNA(Tyr) + L-tyrosine + ATP = L-tyrosyl-tRNA(Tyr) + AMP + diphosphate + H(+). Its function is as follows. Catalyzes the attachment of tyrosine to tRNA(Tyr) in a two-step reaction: tyrosine is first activated by ATP to form Tyr-AMP and then transferred to the acceptor end of tRNA(Tyr). The protein is Tyrosine--tRNA ligase of Rickettsia felis (strain ATCC VR-1525 / URRWXCal2) (Rickettsia azadi).